A 147-amino-acid chain; its full sequence is UPF0306 protein KPN78578_35330 (147 aa).

Belongs to the UPF0306 family.

In Klebsiella pneumoniae subsp. pneumoniae (strain ATCC 700721 / MGH 78578), this protein is UPF0306 protein KPN78578_35330.